The primary structure comprises 474 residues: Cyclin-dependent kinase 18 (474 aa).

6 positions are modified to phosphoserine: serine 14, serine 74, serine 89, serine 98, serine 117, and serine 132. The disordered stretch occupies residues 44 to 87 (DLQLGPLGRDPLQECSTFSPTDSGEEPGQLSPGVQFQRRQNQRR). The 282-residue stretch at 144–425 (YVKLDKLGEG…AEAALSHPYF (282 aa)) folds into the Protein kinase domain. ATP contacts are provided by residues 150-158 (LGEGTYATV) and lysine 173. Aspartate 265 acts as the Proton acceptor in catalysis. Residues serine 440 and serine 443 each carry the phosphoserine modification.

The protein belongs to the protein kinase superfamily. CMGC Ser/Thr protein kinase family. CDC2/CDKX subfamily.

The catalysed reaction is L-seryl-[protein] + ATP = O-phospho-L-seryl-[protein] + ADP + H(+). It carries out the reaction L-threonyl-[protein] + ATP = O-phospho-L-threonyl-[protein] + ADP + H(+). In terms of biological role, may play a role in signal transduction cascades in terminally differentiated cells. The chain is Cyclin-dependent kinase 18 (CDK18) from Pongo abelii (Sumatran orangutan).